Here is a 670-residue protein sequence, read N- to C-terminus: Zinc finger protein 233 (670 aa).

Residues 8-79 (VTFKDVAVVF…ETEIQGDGCS (72 aa)) form the KRAB domain. A C2H2-type 1; degenerate zinc finger spans residues 258–280 (QTSDENGKGLSVGSNLELHQQLH). The segment at 311 to 336 (EKCYRNGDSGEGFSQGSHLQPHQRVS) adopts a C2H2-type 2; degenerate zinc-finger fold. A C2H2-type 3; degenerate zinc finger spans residues 342–364 (YRCQVYARSSNQNSCLPSHELTH). The C2H2-type 4; degenerate zinc-finger motif lies at 370 to 392 (CTCGRCGKGFHHSLDFDIHCVDS). The segment at 398-420 (CKCDVYDKGFSQTSQLQAHQRGH) adopts a C2H2-type 5; degenerate zinc-finger fold. C2H2-type zinc fingers lie at residues 452–474 (YKCEVCDKGFSKASNLQAHQRIH), 480–502 (YKCDVCDKNFSRNSHLQAHQRVH), 508–530 (YKCDTCGKDFSQISHLQAHQRVH), 536–558 (YKCETCGKGFSQSSHLQDHQQVH), 564–586 (YKCDVCGKGFSWSSHLQAHQRVH), 592–614 (YKCEECRKGFIWNSYLHVHQRIH), and 620–642 (YKCGMCGKSFSQTSHLQAHQRVH).

The protein belongs to the krueppel C2H2-type zinc-finger protein family.

The protein resides in the nucleus. Functionally, may be involved in transcriptional regulation. The protein is Zinc finger protein 233 (ZNF233) of Homo sapiens (Human).